The chain runs to 498 residues: Lysine--tRNA ligase (498 aa).

The Mg(2+) site is built by glutamate 401 and glutamate 408.

The protein belongs to the class-II aminoacyl-tRNA synthetase family. In terms of assembly, homodimer. It depends on Mg(2+) as a cofactor.

It localises to the cytoplasm. The catalysed reaction is tRNA(Lys) + L-lysine + ATP = L-lysyl-tRNA(Lys) + AMP + diphosphate. The sequence is that of Lysine--tRNA ligase from Dehalococcoides mccartyi (strain CBDB1).